Here is a 169-residue protein sequence, read N- to C-terminus: Glycine-rich RNA-binding protein 10 (169 aa).

Residues 6–84 (YRCFVGGLAW…RTITVNEAQS (79 aa)) enclose the RRM domain. Disordered regions lie at residues 80–101 (NEAQSRGGGGGGGRGGGGYGGR) and 121–169 (GYGS…GGGW). A compositionally biased stretch (gly residues) spans 85–101 (RGGGGGGGRGGGGYGGR).

As to expression, expressed only in roots and stems.

Its function is as follows. Possibly has a role in RNA transcription or processing during stress. This Brassica napus (Rape) protein is Glycine-rich RNA-binding protein 10 (GRP10).